The primary structure comprises 255 residues: Tabinhibitin 2 (255 aa).

The signal sequence occupies residues 1–23; that stretch reads MISILVSRFLLAALVLQYATIDA. Residues 32 to 34 carry the Cell attachment site motif; it reads RGD. Residues 67-211 enclose the SCP domain; the sequence is LSKINDVRDH…KARALLTCNF (145 aa).

This sequence belongs to the CRISP family. Expressed in salivary glands.

The protein localises to the secreted. Inhibits platelet aggregation induced by all agonists tested (ADP, arachidonic acid, the thromboxane A2 analog U46619, thrombin, and snake venom snaclecs (TMVA that activates platelet through GPIB, and stejnulxin that specifically acts through GPVI (GP6))). May act by competing with fibrinogen for binding to glycoprotein IIb/IIIa (ITGA2B/ITGB3). The protein is Tabinhibitin 2 of Tabanus yao (Horsefly).